Consider the following 358-residue polypeptide: MFEAVEELIGEHADLEKKLADPSVHADQANARKLNKRYAELTPIVATYRSWKQTGDDIETAKEFVADDPDFAAEVKDLEKQREELTEKLRLLLVPRDPSDDKDVILEIKAGAGGDESALFAGDLLRMYLRYAERVGWKTEIIDSTESELGGYKDVQVAVKTKGGQGATEPGQGVWARMKYEGGVHRVQRVPSTESQGRIHTSAAGVLVTPEAEEVDVEIHANDLRIDVYRSSGPGGQSVNTTDSAVRITHLPTGVVASCQNEKSQLQNKEQAMRILRSRLLAAAQEEAEREAADARRSQVRTVDRSEKIRTYNFPENRISDHRVGFKAYNLDQVLDGDLDAMIQACVDADSAAKLAAA.

An N5-methylglutamine modification is found at Gln237.

Belongs to the prokaryotic/mitochondrial release factor family. In terms of processing, methylated by PrmC. Methylation increases the termination efficiency of RF1.

It localises to the cytoplasm. Functionally, peptide chain release factor 1 directs the termination of translation in response to the peptide chain termination codons UAG and UAA. This is Peptide chain release factor 1 from Streptomyces avermitilis (strain ATCC 31267 / DSM 46492 / JCM 5070 / NBRC 14893 / NCIMB 12804 / NRRL 8165 / MA-4680).